A 111-amino-acid chain; its full sequence is Carboxysome shell protein CcmK1 (111 aa).

Residues 4–90 (AVGMIETLGF…PHENLEYVLP (87 aa)) form the BMC domain.

The protein belongs to the bacterial microcompartments protein family. CcmK subfamily. As to quaternary structure, homohexamer. Interacts with full-length CcmM. Forms mixed heterohexamers of all possible stoichiometries with CcmK2, which might form dodecamers. Only very weak interactions with CcmK3 and CcmK4 were seen. Interacts with CcmN and CcmO in the carboxysome.

The protein resides in the carboxysome. In terms of biological role, one of the shell proteins of the carboxysome, a polyhedral inclusion where RuBisCO (ribulose bisphosphate carboxylase, rbcL-rbcS) is sequestered. Assembles into hexamers which make sheets that form the facets of the polyhedral carboxysome. The hexamer central pore probably regulates metabolite flux. Probably the major shell protein of the carboxysome, a polyhedral inclusion where RuBisCO (ribulose bisphosphate carboxylase, rbcL-rbcS) is sequestered. The central pore probably regulates metabolite flux. Hexamers make sheets that form the facets of the carboxysome. In Synechocystis sp. (strain ATCC 27184 / PCC 6803 / Kazusa), this protein is Carboxysome shell protein CcmK1.